Consider the following 60-residue polypeptide: Metallothionein (60 aa).

The interval 1 to 28 (MDPCECSKGGTCNCGGSCTCTNCSCTTC) is beta. The a divalent metal cation site is built by C4, C6, C12, C14, C18, C20, C23, C25, C28, C32, C33, C35, C36, C40, C43, C47, C49, C54, C58, and C59. Residues 29-60 (KKSCCPCCPSGCPKCASGCVCKGKTCDAACCQ) form an alpha region.

The protein belongs to the metallothionein superfamily. Type 1 family.

Metallothioneins have a high content of cysteine residues that bind various heavy metals. In Perca fluviatilis (European perch), this protein is Metallothionein (mt).